A 1031-amino-acid polypeptide reads, in one-letter code: Protein draper (1031 aa).

Positions 1 to 16 (MLPVILIACLAQLVLA) are cleaved as a signal peptide. Residues 17 to 800 (QADLKDLDGP…DQSENSSRAS (784 aa)) are Extracellular-facing. Residues 25 to 100 (GPNICKRREL…YIASAGECVP (76 aa)) enclose the EMI domain. 6 disulfide bridges follow: Cys29-Cys88, Cys55-Cys62, Cys87-Cys98, Cys102-Cys111, Cys106-Cys117, and Cys119-Cys128. N-linked (GlcNAc...) asparagine glycosylation occurs at Asn73. 6 EGF-like domains span residues 99-129 (VPHCSEPCQHGRCISPEKCKCDHGYGGPACD), 137-172 (YGRNCSMQCDCLNNAVCEPFSGDCECAKGYTGARCA), 180-215 (FGANCSEKCRCENGGKCHHVSGECQCAPGFTGPLCD), 223-258 (HGAQCQQDCPCQNDGKCQPETGACMCNPGWTGDVCA), 266-301 (YGPGCQESCECYKGAPCHHITGQCECPPGYRGERCF), and 309-344 (YGFNCSMTCDCANDAMCDRANGTCICNPGWTGAKCA). N-linked (GlcNAc...) asparagine glycosylation is present at Asn140. 3 disulfide bridges follow: Cys141–Cys153, Cys147–Cys160, and Cys162–Cys171. Asn183 carries N-linked (GlcNAc...) asparagine glycosylation. 9 disulfide bridges follow: Cys184–Cys196, Cys190–Cys203, Cys205–Cys214, Cys227–Cys239, Cys233–Cys246, Cys248–Cys257, Cys270–Cys282, Cys276–Cys289, and Cys291–Cys300. Asn312 carries an N-linked (GlcNAc...) asparagine glycan. 3 disulfide bridges follow: Cys313/Cys325, Cys319/Cys332, and Cys334/Cys343. N-linked (GlcNAc...) asparagine glycosylation is present at Asn329. A glycan (N-linked (GlcNAc...) asparagine) is linked at Asn358. 2 consecutive EGF-like domains span residues 398–433 (YGPNCELTCNCKNGAKCSPVNGTCLCAPGWRGPTCE) and 484–519 (FGQDCAKVCDCHNNAACNPQNGSCTCAAGWTGERCE). Cystine bridges form between Cys402/Cys414, Cys408/Cys421, Cys423/Cys432, Cys488/Cys500, Cys494/Cys507, and Cys509/Cys518. N-linked (GlcNAc...) asparagine glycosylation occurs at Asn418. Asn504 carries an N-linked (GlcNAc...) asparagine glycan. N-linked (GlcNAc...) asparagine glycosylation is found at Asn540, Asn584, and Asn585. The 36-residue stretch at 572–607 (YGENCDKVCRCLNNSSCDPDSGNCICSAGWTGADCA) folds into the EGF-like 9 domain. Disulfide bonds link Cys576–Cys588, Cys582–Cys595, and Cys597–Cys606. Asn630 carries N-linked (GlcNAc...) asparagine glycosylation. Positions 660–695 (YGPGCKLKCNCEHGGECNHVTGQCQCLPGWTGSNCN) constitute an EGF-like 10 domain. Disulfide bonds link Cys664-Cys676, Cys670-Cys683, and Cys685-Cys694. N-linked (GlcNAc...) asparagine glycans are attached at residues Asn695 and Asn795. Residues 801-821 (VALTLVLMTLFACIIFAVFIY) traverse the membrane as a helical segment. Over 822 to 1031 (YRRRVSNLKT…SPSSSPKFLK (210 aa)) the chain is Cytoplasmic. A compositionally biased stretch (basic and acidic residues) spans 940 to 954 (KEGYKDPDEYDHLDY). Disordered stretches follow at residues 940 to 964 (KEGYKDPDEYDHLDYSRPSTSQKPH) and 989 to 1031 (TVLL…KFLK). Polar residues predominate over residues 1009–1031 (DNTNTNLDNVSTASPSSSPKFLK).

The protein belongs to the MEGF family. Interacts (via the cytoplasmic domain) with shark; this is required for the recruitment of drpr and glial cells to severed axons and for the phagocytosis of axonal debris by glial cells following axon injury. Interacts with ced-6. In terms of assembly, interacts with csw; this results in dephosphorylation of drpr isoform A which is required for the inhibition of glial cell engulfment of axonal debris produced following axonal injury. Post-translationally, phosphorylated on tyrosine residues. Phosphorylation is induced by binding to prtp. It is also induced by binding to the membrane phospholipid phosphatidylserine. Phosphorylation may be mediated directly or indirectly by Src42a and is required for interaction with shark. In terms of processing, dephosphorylated by csw which is required for the inhibition of glial cell engulfment of axonal debris produced following axonal injury. As to expression, expressed in adult head (at protein level). Expressed in glia, macrophages and ectoderm (at protein level). Detected in glia around the mushroom body dorsal lobe and in glial processes infiltrating the medial lobe (at protein level). Expressed in adult brain glia including antennal lobe glia (at protein level). Expressed in the larval fat body (at protein level). Expressed in the ovary (at protein level). Isoform B: Predominant isoform in adult glia.

Its subcellular location is the cell membrane. It localises to the cell projection. The protein resides in the axon. The protein localises to the cytoplasm. It is found in the postsynaptic cell membrane. Its subcellular location is the cell cortex. It localises to the phagocytic cup. The protein resides in the cytoplasmic vesicle. The protein localises to the phagosome. In terms of biological role, receptor which is involved in the phagocytosis of a variety of cells including apoptotic cells, severed and pruned axons, degenerating dendrites, salivary gland cells, germline cells and bacteria. Binds to the ligand prtp which relocates from the endoplasmic reticulum to the cell surface during apoptosis. Ligand-binding may promote tyrosine phosphorylation mediated by Src42a, interaction with shark and subsequent activation of phagocytosis. Also binds to the membrane phospholipid phosphatidylserine which is exposed on the surface of apoptotic cells. Required for the phagocytosis of apoptotic cells by macrophages. Also required for the phagocytosis of apoptotic neurons by glial cells in the embryonic nervous system. Acts downstream of NimC4/simu in the glial phagocytosis of apoptotic neurons. Plays a role in the glial engulfment of larval axons as part of programmed axon pruning during metamorphosis. Also mediates glial cell clearance of severed axons following axonal injury. Required for the engulfment of degenerating dendrites by epidermal cells. Required in the ovary for the engulfment and subsequent processing of dying germline cells by follicular epithelial cells through activation of the JNK/bsk pathway. Plays a role in neuromuscular junction development by mediating the clearance of presynaptic debris and immature boutons which are shed by growing synapses. Required for larval salivary gland cell death which occurs following a rise in steroid levels after puparium formation. Also involved in bacterial phagocytosis. Required for hemocyte phagocytosis of the Gram-positive bacterium S.aureus. Lipoteichoic acid, synthesized by the S.aureus lipoteichoic acid synthase ltaS, acts as a ligand for drpr in this process. Together with Src42a and shark, promotes the migration of macrophages to sites of wounding as part of a signaling cascade where Scr42a detects production of hydrogen peroxide at wound sites which triggers phosphorylation of drpr and subsequent recruitment and activation of shark. Also required for macrophage priming which occurs following phagocytosis of apoptotic cells and ensures that macrophages develop a form of molecular memory that allows them to later mount an inflammatory response to tissue damage and bacterial infection. Is also an essential factor in the regulation of muscle development and myogenesis, and as a consequence is required for normal locomotion. Likely to control the balance between skeletal muscle satellite cells proliferation and differentiation through regulation of the notch signaling pathway. Promotes engulfment of axonal debris by glial cells following axonal injury. Its function is as follows. Potently inhibits glial cell engulfment of axonal debris produced following axonal injury. This chain is Protein draper, found in Drosophila melanogaster (Fruit fly).